Consider the following 457-residue polypeptide: UDP-N-acetylmuramoylalanine--D-glutamate ligase (457 aa).

Gly-126–Ser-132 lines the ATP pocket.

Belongs to the MurCDEF family.

The protein resides in the cytoplasm. The enzyme catalyses UDP-N-acetyl-alpha-D-muramoyl-L-alanine + D-glutamate + ATP = UDP-N-acetyl-alpha-D-muramoyl-L-alanyl-D-glutamate + ADP + phosphate + H(+). It functions in the pathway cell wall biogenesis; peptidoglycan biosynthesis. In terms of biological role, cell wall formation. Catalyzes the addition of glutamate to the nucleotide precursor UDP-N-acetylmuramoyl-L-alanine (UMA). The chain is UDP-N-acetylmuramoylalanine--D-glutamate ligase from Deinococcus radiodurans (strain ATCC 13939 / DSM 20539 / JCM 16871 / CCUG 27074 / LMG 4051 / NBRC 15346 / NCIMB 9279 / VKM B-1422 / R1).